A 494-amino-acid polypeptide reads, in one-letter code: Alpha-amylase A (494 aa).

The first 18 residues, methionine 1–alanine 18, serve as a signal peptide directing secretion. A Pyrrolidone carboxylic acid modification is found at glutamine 19. A disulfide bridge links cysteine 46 with cysteine 102. Asparagine 116, arginine 165, and aspartate 174 together coordinate Ca(2+). Residues cysteine 153 and cysteine 167 are joined by a disulfide bond. Arginine 202 provides a ligand contact to chloride. The Nucleophile role is filled by aspartate 204. Ca(2+) is bound at residue histidine 208. The active-site Proton donor is the glutamate 241. Residues asparagine 304 and arginine 343 each coordinate chloride. Disulfide bonds link cysteine 376/cysteine 382 and cysteine 448/cysteine 460.

The protein belongs to the glycosyl hydrolase 13 family. In terms of assembly, monomer. It depends on Ca(2+) as a cofactor. Chloride serves as cofactor.

The catalysed reaction is Endohydrolysis of (1-&gt;4)-alpha-D-glucosidic linkages in polysaccharides containing three or more (1-&gt;4)-alpha-linked D-glucose units.. This chain is Alpha-amylase A (Amy-d), found in Drosophila mauritiana (Fruit fly).